The primary structure comprises 427 residues: Tryptophan synthase beta chain 1 (427 aa).

Lys-107 carries the N6-(pyridoxal phosphate)lysine modification.

This sequence belongs to the TrpB family. Tetramer of two alpha and two beta chains. Pyridoxal 5'-phosphate serves as cofactor.

It carries out the reaction (1S,2R)-1-C-(indol-3-yl)glycerol 3-phosphate + L-serine = D-glyceraldehyde 3-phosphate + L-tryptophan + H2O. Its pathway is amino-acid biosynthesis; L-tryptophan biosynthesis; L-tryptophan from chorismate: step 5/5. In terms of biological role, the beta subunit is responsible for the synthesis of L-tryptophan from indole and L-serine. The polypeptide is Tryptophan synthase beta chain 1 (trpB1) (Aeropyrum pernix (strain ATCC 700893 / DSM 11879 / JCM 9820 / NBRC 100138 / K1)).